The sequence spans 250 residues: UPF0259 membrane protein PC1_1998 (250 aa).

Transmembrane regions (helical) follow at residues 20–40 (FISI…LNHA), 90–110 (FAAL…IQLV), 132–152 (LLFL…LLVI), 156–176 (LLAI…SGIF), 192–212 (ATAP…LVVS), and 222–242 (LGVV…IYLF).

It belongs to the UPF0259 family.

The protein localises to the cell inner membrane. This chain is UPF0259 membrane protein PC1_1998, found in Pectobacterium carotovorum subsp. carotovorum (strain PC1).